A 319-amino-acid polypeptide reads, in one-letter code: Ribosomal RNA large subunit methyltransferase F (319 aa).

It belongs to the methyltransferase superfamily. METTL16/RlmF family.

It localises to the cytoplasm. The enzyme catalyses adenosine(1618) in 23S rRNA + S-adenosyl-L-methionine = N(6)-methyladenosine(1618) in 23S rRNA + S-adenosyl-L-homocysteine + H(+). In terms of biological role, specifically methylates the adenine in position 1618 of 23S rRNA. This chain is Ribosomal RNA large subunit methyltransferase F, found in Aliivibrio fischeri (strain ATCC 700601 / ES114) (Vibrio fischeri).